The primary structure comprises 323 residues: Small ribosomal subunit protein uS2 (323 aa).

The interval 295–323 (VVNRDRAGFNKKQPKAEEAAKPAEKKAEK) is disordered.

Belongs to the universal ribosomal protein uS2 family.

The polypeptide is Small ribosomal subunit protein uS2 (Mycoplasmoides gallisepticum (strain R(low / passage 15 / clone 2)) (Mycoplasma gallisepticum)).